The chain runs to 375 residues: Chaperone protein DnaJ (375 aa).

Positions 5-68 (DYYEILGVSK…KKRAQYDQFG (64 aa)) constitute a J domain. The CR-type zinc-finger motif lies at 135 to 217 (GISKNINYDR…CYGKKVINER (83 aa)). Zn(2+)-binding residues include cysteine 148, cysteine 151, cysteine 165, cysteine 168, cysteine 191, cysteine 194, cysteine 205, and cysteine 208. 4 CXXCXGXG motif repeats span residues 148 to 155 (CHKCQGTG), 165 to 172 (CTKCHGRG), 191 to 198 (CHECEGTG), and 205 to 212 (CEQCYGKK).

The protein belongs to the DnaJ family. As to quaternary structure, homodimer. The cofactor is Zn(2+).

Its subcellular location is the cytoplasm. Participates actively in the response to hyperosmotic and heat shock by preventing the aggregation of stress-denatured proteins and by disaggregating proteins, also in an autonomous, DnaK-independent fashion. Unfolded proteins bind initially to DnaJ; upon interaction with the DnaJ-bound protein, DnaK hydrolyzes its bound ATP, resulting in the formation of a stable complex. GrpE releases ADP from DnaK; ATP binding to DnaK triggers the release of the substrate protein, thus completing the reaction cycle. Several rounds of ATP-dependent interactions between DnaJ, DnaK and GrpE are required for fully efficient folding. Also involved, together with DnaK and GrpE, in the DNA replication of plasmids through activation of initiation proteins. The protein is Chaperone protein DnaJ of Ureaplasma parvum serovar 3 (strain ATCC 700970).